A 251-amino-acid chain; its full sequence is Ubiquinone/menaquinone biosynthesis C-methyltransferase UbiE (251 aa).

Residues Thr74, Asp95, 123 to 124, and Ser140 contribute to the S-adenosyl-L-methionine site; that span reads NA.

This sequence belongs to the class I-like SAM-binding methyltransferase superfamily. MenG/UbiE family.

It catalyses the reaction a 2-demethylmenaquinol + S-adenosyl-L-methionine = a menaquinol + S-adenosyl-L-homocysteine + H(+). The catalysed reaction is a 2-methoxy-6-(all-trans-polyprenyl)benzene-1,4-diol + S-adenosyl-L-methionine = a 5-methoxy-2-methyl-3-(all-trans-polyprenyl)benzene-1,4-diol + S-adenosyl-L-homocysteine + H(+). Its pathway is quinol/quinone metabolism; menaquinone biosynthesis; menaquinol from 1,4-dihydroxy-2-naphthoate: step 2/2. It participates in cofactor biosynthesis; ubiquinone biosynthesis. Its function is as follows. Methyltransferase required for the conversion of demethylmenaquinol (DMKH2) to menaquinol (MKH2) and the conversion of 2-polyprenyl-6-methoxy-1,4-benzoquinol (DDMQH2) to 2-polyprenyl-3-methyl-6-methoxy-1,4-benzoquinol (DMQH2). In Escherichia coli O1:K1 / APEC, this protein is Ubiquinone/menaquinone biosynthesis C-methyltransferase UbiE.